Here is a 620-residue protein sequence, read N- to C-terminus: Chaperone protein DnaK (620 aa).

Positions 579–620 (KAQKEASAGAEASEDASGPSSTGSASDDDVVDADYEVVDEDK) are disordered. Low complexity predominate over residues 583–603 (EASAGAEASEDASGPSSTGSA). A compositionally biased stretch (acidic residues) spans 604–620 (SDDDVVDADYEVVDEDK).

The protein belongs to the heat shock protein 70 family.

Functionally, acts as a chaperone. This chain is Chaperone protein DnaK, found in Methanococcoides burtonii (strain DSM 6242 / NBRC 107633 / OCM 468 / ACE-M).